Here is a 54-residue protein sequence, read N- to C-terminus: Ovomucoid (54 aa).

One can recognise a Kazal-like domain in the interval 4 to 54 (VDCSDYPKPVCSLEDMPLCGSDSKTYSNKCNFCNAVVDSNGTLTLSHFGKC). 3 cysteine pairs are disulfide-bonded: C6-C36, C14-C33, and C22-C54. Residue N43 is glycosylated (N-linked (GlcNAc...) asparagine).

It is found in the secreted. The chain is Ovomucoid from Vultur gryphus (Andean condor).